The primary structure comprises 107 residues: NADH-quinone oxidoreductase subunit K 2 (107 aa).

Helical transmembrane passes span 3–23 (LPIYYPLGLGALLFGLGLWGA), 30–50 (VRILMFIEIMLNGVNLNLITF), and 67–87 (ILTLFVMTVAAAEASVGLAII).

It belongs to the complex I subunit 4L family. As to quaternary structure, NDH-1 is composed of 14 different subunits. Subunits NuoA, H, J, K, L, M, N constitute the membrane sector of the complex.

It localises to the cell membrane. It catalyses the reaction a quinone + NADH + 5 H(+)(in) = a quinol + NAD(+) + 4 H(+)(out). In terms of biological role, NDH-1 shuttles electrons from NADH, via FMN and iron-sulfur (Fe-S) centers, to quinones in the respiratory chain. The immediate electron acceptor for the enzyme in this species is believed to be a menaquinone. Couples the redox reaction to proton translocation (for every two electrons transferred, four hydrogen ions are translocated across the cytoplasmic membrane), and thus conserves the redox energy in a proton gradient. This chain is NADH-quinone oxidoreductase subunit K 2, found in Symbiobacterium thermophilum (strain DSM 24528 / JCM 14929 / IAM 14863 / T).